The sequence spans 351 residues: Ferrochelatase (351 aa).

The Fe cation site is built by His-184 and Glu-265.

This sequence belongs to the ferrochelatase family.

It is found in the cytoplasm. The enzyme catalyses heme b + 2 H(+) = protoporphyrin IX + Fe(2+). Its pathway is porphyrin-containing compound metabolism; protoheme biosynthesis; protoheme from protoporphyrin-IX: step 1/1. Its function is as follows. Catalyzes the ferrous insertion into protoporphyrin IX. This is Ferrochelatase from Rhodopirellula baltica (strain DSM 10527 / NCIMB 13988 / SH1).